The sequence spans 466 residues: Argininosuccinate lyase (466 aa).

Residues serine 27, asparagine 114, and threonine 159 each contribute to the 2-(N(omega)-L-arginino)succinate site. The active-site Proton acceptor is histidine 160. Serine 281 serves as the catalytic Proton donor. 4 residues coordinate 2-(N(omega)-L-arginino)succinate: asparagine 289, tyrosine 321, glutamine 326, and lysine 329.

This sequence belongs to the lyase 1 family. Argininosuccinate lyase subfamily. As to quaternary structure, homotetramer. As to expression, eye lens.

The catalysed reaction is 2-(N(omega)-L-arginino)succinate = fumarate + L-arginine. It functions in the pathway amino-acid biosynthesis; L-arginine biosynthesis; L-arginine from L-ornithine and carbamoyl phosphate: step 3/3. In terms of biological role, delta crystallin, the principal crystallin in embryonic lens, is found only in birds and reptiles. This protein may also function as an enzymatically active argininosuccinate lyase. This chain is Argininosuccinate lyase (ASL2), found in Gallus gallus (Chicken).